A 381-amino-acid polypeptide reads, in one-letter code: Erythronate-4-phosphate dehydrogenase (381 aa).

Positions 45 and 67 each coordinate substrate. Residues 127–128 (QV), Asp-147, and Thr-176 each bind NAD(+). Residue Arg-209 is part of the active site. Asp-233 contributes to the NAD(+) binding site. Residue Glu-238 is part of the active site. The Proton donor role is filled by His-255. Gly-258 lines the NAD(+) pocket. A substrate-binding site is contributed by Tyr-259.

This sequence belongs to the D-isomer specific 2-hydroxyacid dehydrogenase family. PdxB subfamily. Homodimer.

It localises to the cytoplasm. The enzyme catalyses 4-phospho-D-erythronate + NAD(+) = (R)-3-hydroxy-2-oxo-4-phosphooxybutanoate + NADH + H(+). It functions in the pathway cofactor biosynthesis; pyridoxine 5'-phosphate biosynthesis; pyridoxine 5'-phosphate from D-erythrose 4-phosphate: step 2/5. Catalyzes the oxidation of erythronate-4-phosphate to 3-hydroxy-2-oxo-4-phosphonooxybutanoate. The chain is Erythronate-4-phosphate dehydrogenase from Vibrio cholerae serotype O1 (strain ATCC 39315 / El Tor Inaba N16961).